A 294-amino-acid polypeptide reads, in one-letter code: uncharacterized protein (294 aa).

The protein resides in the mitochondrion. This is an uncharacterized protein from Zea mays (Maize).